A 276-amino-acid chain; its full sequence is Methylesterase 17 (276 aa).

In terms of domain architecture, AB hydrolase-1 spans proline 19–proline 138. The Acyl-ester intermediate role is filled by serine 95. Catalysis depends on charge relay system residues aspartate 225 and histidine 252.

This sequence belongs to the AB hydrolase superfamily. Methylesterase family. As to expression, expressed in several tissues of seedlings and adult plants, with a higher relative level of expression in the seedling shoot apex and the adult stem.

It carries out the reaction methyl (indol-3-yl)acetate + H2O = (indol-3-yl)acetate + methanol + H(+). Its pathway is plant hormone biosynthesis. Methylesterase that efficiently and specifically hydrolyzes methyl indole-3-acetic acid (MeIAA) to IAA (auxin). MeIAA is believed to be an inactive form of auxin that needs to be demethylated to exert a biological effect. This is Methylesterase 17 from Arabidopsis thaliana (Mouse-ear cress).